The sequence spans 275 residues: Chlorophyll a-b binding protein 3, chloroplastic (275 aa).

Position 58 (W58) interacts with chlorophyll b. 3 residues coordinate chlorophyll a: F78, S84, and E102. Chlorophyll b contacts are provided by R107, I142, E169, and R172. 6 residues coordinate chlorophyll a: K226, E227, N230, R232, Q244, and H259. The chain crosses the membrane as a helical span at residues 233–253 (LAMLAILGYFIQGLVTGVGPY).

The protein belongs to the light-harvesting chlorophyll a/b-binding (LHC) protein family. As to quaternary structure, the LHC complex consists of chlorophyll a-b binding proteins. It depends on Binds at least 14 chlorophylls (8 Chl-a and 6 Chl-b) and carotenoids such as lutein and neoxanthin. as a cofactor. Photoregulated by reversible phosphorylation of its threonine residues.

The protein resides in the plastid. Its subcellular location is the chloroplast thylakoid membrane. Its function is as follows. The light-harvesting complex (LHC) functions as a light receptor, it captures and delivers excitation energy to photosystems with which it is closely associated. Functionally, may channel protons produced in the catalytic Mn center of water oxidation into the thylakoid lumen. In Pisum sativum (Garden pea), this protein is Chlorophyll a-b binding protein 3, chloroplastic.